An 80-amino-acid polypeptide reads, in one-letter code: Exodeoxyribonuclease 7 small subunit (80 aa).

This sequence belongs to the XseB family. Heterooligomer composed of large and small subunits.

The protein localises to the cytoplasm. It catalyses the reaction Exonucleolytic cleavage in either 5'- to 3'- or 3'- to 5'-direction to yield nucleoside 5'-phosphates.. Bidirectionally degrades single-stranded DNA into large acid-insoluble oligonucleotides, which are then degraded further into small acid-soluble oligonucleotides. The polypeptide is Exodeoxyribonuclease 7 small subunit (Pseudomonas entomophila (strain L48)).